A 179-amino-acid polypeptide reads, in one-letter code: Bifunctional protein PyrR (179 aa).

The PRPP-binding motif lies at 97–109 (VILIDDVLFTGRT).

This sequence belongs to the purine/pyrimidine phosphoribosyltransferase family. PyrR subfamily.

It carries out the reaction UMP + diphosphate = 5-phospho-alpha-D-ribose 1-diphosphate + uracil. Regulates the transcription of the pyrimidine nucleotide (pyr) operon in response to exogenous pyrimidines. Its function is as follows. Also displays a weak uracil phosphoribosyltransferase activity which is not physiologically significant. The sequence is that of Bifunctional protein PyrR from Actinobacillus pleuropneumoniae serotype 5b (strain L20).